The primary structure comprises 147 residues: Nucleoside diphosphate kinase (147 aa).

K9, F57, R85, T91, R102, and N112 together coordinate ATP. H115 serves as the catalytic Pros-phosphohistidine intermediate.

This sequence belongs to the NDK family. As to quaternary structure, homotetramer. It depends on Mg(2+) as a cofactor.

Its subcellular location is the cytoplasm. It carries out the reaction a 2'-deoxyribonucleoside 5'-diphosphate + ATP = a 2'-deoxyribonucleoside 5'-triphosphate + ADP. The enzyme catalyses a ribonucleoside 5'-diphosphate + ATP = a ribonucleoside 5'-triphosphate + ADP. In terms of biological role, major role in the synthesis of nucleoside triphosphates other than ATP. The ATP gamma phosphate is transferred to the NDP beta phosphate via a ping-pong mechanism, using a phosphorylated active-site intermediate. This is Nucleoside diphosphate kinase from Brevibacillus brevis (strain 47 / JCM 6285 / NBRC 100599).